Here is an 841-residue protein sequence, read N- to C-terminus: Probable outer membrane usher protein EcpC (841 aa).

A signal peptide spans M1–A29.

This sequence belongs to the EcpC/MatD family.

Part of the ecpRABCDE operon, which encodes the E.coli common pilus (ECP). ECP is found in both commensal and pathogenic strains and plays a dual role in early-stage biofilm development and host cell recognition. This chain is Probable outer membrane usher protein EcpC (ecpC), found in Escherichia coli O127:H6 (strain E2348/69 / EPEC).